Reading from the N-terminus, the 233-residue chain is Coproporphyrinogen-III oxidase 2, chloroplastic (233 aa).

A chloroplast-targeting transit peptide spans 1 to 48 (MASHSSTLFTSPSSFILFSSHRLKSSPNYFTYHFPRSVKRPHFDLRCS). S174 is a substrate binding site. Residue H188 is the Proton donor of the active site.

It belongs to the aerobic coproporphyrinogen-III oxidase family. As to quaternary structure, homodimer.

Its subcellular location is the plastid. The protein localises to the chloroplast. It carries out the reaction coproporphyrinogen III + O2 + 2 H(+) = protoporphyrinogen IX + 2 CO2 + 2 H2O. It participates in porphyrin-containing compound metabolism; protoporphyrin-IX biosynthesis; protoporphyrinogen-IX from coproporphyrinogen-III (O2 route): step 1/1. The protein operates within porphyrin-containing compound metabolism; chlorophyll biosynthesis. Its function is as follows. Key enzyme in heme biosynthesis. Catalyzes the oxidative decarboxylation of propionic acid side chains of rings A and B of coproporphyrinogen III. The polypeptide is Coproporphyrinogen-III oxidase 2, chloroplastic (CPX2) (Arabidopsis thaliana (Mouse-ear cress)).